Reading from the N-terminus, the 229-residue chain is UPF0173 metal-dependent hydrolase SAB1566c (229 aa).

The protein belongs to the UPF0173 family.

The sequence is that of UPF0173 metal-dependent hydrolase SAB1566c from Staphylococcus aureus (strain bovine RF122 / ET3-1).